Consider the following 284-residue polypeptide: Homeobox protein SMOX-5 (284 aa).

A DNA-binding region (homeobox) is located at residues 37-96 (RRKTRTTFSNCQLNELENNFNRQRYLTPTDRDRIAKHLGLTNTQVITWFQNRRAKLKREA). Residues 117–172 (LSLSDHDHEETQIDDENEQGDNNNDDDGDDNDVEEDDGEEQEKNHTKYLTQPPSIS) form a disordered region. The span at 128 to 156 (QIDDENEQGDNNNDDDGDDNDVEEDDGEE) shows a compositional bias: acidic residues.

It is found in the nucleus. This Schistosoma mansoni (Blood fluke) protein is Homeobox protein SMOX-5 (SMOX-5).